The primary structure comprises 431 residues: RbAp48-related WD40 repeat-containing protein prw1 (431 aa).

6 WD repeats span residues 127-159, 182-213, 232-263, 279-310, 323-354, and 380-411; these read SHPE…LVFD, KHTQ…SCWD, SHEK…HVHD, AHSG…ALWD, GHED…LVWD, and GHTS…QIWT.

The protein belongs to the WD repeat HIR1 family. In terms of assembly, heterotetramer of alp13, clr6, prw1 and pst2.

The protein localises to the nucleus. Has a role in chromatin assembly and chromosome segregation. Involved in the deacetylation of histones. The polypeptide is RbAp48-related WD40 repeat-containing protein prw1 (prw1) (Schizosaccharomyces pombe (strain 972 / ATCC 24843) (Fission yeast)).